Reading from the N-terminus, the 489-residue chain is Protein nucleotidyltransferase YdiU (489 aa).

ATP is bound by residues glycine 88, glycine 90, arginine 91, lysine 111, aspartate 123, glycine 124, arginine 174, and arginine 181. Catalysis depends on aspartate 250, which acts as the Proton acceptor. Mg(2+)-binding residues include asparagine 251 and aspartate 260. ATP is bound at residue aspartate 260.

Belongs to the SELO family. It depends on Mg(2+) as a cofactor. The cofactor is Mn(2+).

It catalyses the reaction L-seryl-[protein] + ATP = 3-O-(5'-adenylyl)-L-seryl-[protein] + diphosphate. The enzyme catalyses L-threonyl-[protein] + ATP = 3-O-(5'-adenylyl)-L-threonyl-[protein] + diphosphate. The catalysed reaction is L-tyrosyl-[protein] + ATP = O-(5'-adenylyl)-L-tyrosyl-[protein] + diphosphate. It carries out the reaction L-histidyl-[protein] + UTP = N(tele)-(5'-uridylyl)-L-histidyl-[protein] + diphosphate. It catalyses the reaction L-seryl-[protein] + UTP = O-(5'-uridylyl)-L-seryl-[protein] + diphosphate. The enzyme catalyses L-tyrosyl-[protein] + UTP = O-(5'-uridylyl)-L-tyrosyl-[protein] + diphosphate. Nucleotidyltransferase involved in the post-translational modification of proteins. It can catalyze the addition of adenosine monophosphate (AMP) or uridine monophosphate (UMP) to a protein, resulting in modifications known as AMPylation and UMPylation. The chain is Protein nucleotidyltransferase YdiU from Vibrio cholerae serotype O1 (strain ATCC 39315 / El Tor Inaba N16961).